We begin with the raw amino-acid sequence, 431 residues long: Trigger factor (431 aa).

The PPIase FKBP-type domain maps to 161-245 (TDIVIGDVQK…VKEIKRMELP (85 aa)).

The protein belongs to the FKBP-type PPIase family. Tig subfamily.

It is found in the cytoplasm. The enzyme catalyses [protein]-peptidylproline (omega=180) = [protein]-peptidylproline (omega=0). Involved in protein export. Acts as a chaperone by maintaining the newly synthesized protein in an open conformation. Functions as a peptidyl-prolyl cis-trans isomerase. In Chloroherpeton thalassium (strain ATCC 35110 / GB-78), this protein is Trigger factor.